We begin with the raw amino-acid sequence, 310 residues long: Olfactory receptor 1496 (310 aa).

Over 1-23 the chain is Extracellular; that stretch reads MNNQTFITQFLLLGLPIPEEHQH. The N-linked (GlcNAc...) asparagine glycan is linked to asparagine 3. A helical transmembrane segment spans residues 24-48; that stretch reads LFYALFLVMYLTTILGNLLIIVLVQ. At 49 to 55 the chain is on the cytoplasmic side; the sequence is LDSQLHT. The helical transmembrane segment at 56–77 threads the bilayer; it reads PMYLFLSNLSFSDLCFSSVTMP. Topologically, residues 78–98 are extracellular; it reads KLLQNMRSQDTSIPYGGCLAQ. A disulfide bridge links cysteine 95 with cysteine 187. A helical membrane pass occupies residues 99–118; it reads TYFFMVFGDMESFLLVAMAY. At 119–137 the chain is on the cytoplasmic side; that stretch reads DRYVAICFPLHYTSIMSPK. The chain crosses the membrane as a helical span at residues 138-156; the sequence is LCTCLVLLLWMLTTSHAMM. The Extracellular segment spans residues 157–194; sequence HTLLAARLSFCENNVVLNFFCDLFVLLKLACSDTYINE. A helical membrane pass occupies residues 195–217; that stretch reads LMIFIMSTLLIIIPFFLIVMSYA. The Cytoplasmic portion of the chain corresponds to 218-234; the sequence is RIISSILKVPSTQGICK. The helical transmembrane segment at 235-258 threads the bilayer; the sequence is VFSTCGSHLSVVSLFYGTIIGLYL. At 259–270 the chain is on the extracellular side; sequence CPAGNNSTVKEM. Residues 271-290 traverse the membrane as a helical segment; it reads VMAMMYTVVTPMLNPFIYSL. The Cytoplasmic portion of the chain corresponds to 291-310; that stretch reads RNRDMKRALIRVICSMKITL.

It belongs to the G-protein coupled receptor 1 family. Olfactory epithelium.

Its subcellular location is the cell membrane. Its function is as follows. Odorant receptor. The chain is Olfactory receptor 1496 (Olr1496) from Rattus norvegicus (Rat).